A 306-amino-acid polypeptide reads, in one-letter code: Protein farnesyltransferase/geranylgeranyltransferase type-1 subunit alpha (306 aa).

PFTA repeat units lie at residues 48–82 (YSERALHITELGINELASHYTIWIYRFNILKNLPN), 84–118 (NLYDELDWCEEIALDNEKNYQIWNYRQLIIGQIME), 125–159 (DPYREFPILEAMLSSDPKNHHVWSYRKWLVDTFDL), 161–195 (NDAKELSFVDKVIDTDLKNNSAWSHRFFLLFSKKH), and 201–235 (TIDEELNYVKDKIVKCPQNPSTWNYLLGIHERFDR).

It belongs to the protein prenyltransferase subunit alpha family. As to quaternary structure, heterodimer of an alpha and a beta subunit. Mg(2+) is required as a cofactor.

The catalysed reaction is L-cysteinyl-[protein] + (2E,6E)-farnesyl diphosphate = S-(2E,6E)-farnesyl-L-cysteinyl-[protein] + diphosphate. It catalyses the reaction geranylgeranyl diphosphate + L-cysteinyl-[protein] = S-geranylgeranyl-L-cysteinyl-[protein] + diphosphate. Essential subunit of both the farnesyltransferase and the geranylgeranyltransferase complex. Contributes to the transfer of a farnesyl or geranylgeranyl moiety from farnesyl or geranylgeranyl diphosphate to a cysteine at the fourth position from the C-terminus of several proteins having the C-terminal sequence Cys-aliphatic-aliphatic-X. The chain is Protein farnesyltransferase/geranylgeranyltransferase type-1 subunit alpha (RAM2) from Candida albicans (Yeast).